We begin with the raw amino-acid sequence, 200 residues long: NAD(P)H dehydrogenase (quinone) (200 aa).

One can recognise a Flavodoxin-like domain in the interval 4–190 (VLVLYYSTYG…DGARFQGRLV (187 aa)). FMN-binding positions include 10–15 (STYGHL) and 78–80 (TRF). Residue tyrosine 12 participates in NAD(+) binding. Tryptophan 98 serves as a coordination point for substrate. FMN-binding positions include 113–119 (STATQHG) and histidine 134.

This sequence belongs to the WrbA family. The cofactor is FMN.

The enzyme catalyses a quinone + NADH + H(+) = a quinol + NAD(+). The catalysed reaction is a quinone + NADPH + H(+) = a quinol + NADP(+). The protein is NAD(P)H dehydrogenase (quinone) of Acidovorax ebreus (strain TPSY) (Diaphorobacter sp. (strain TPSY)).